The primary structure comprises 388 residues: Formate-dependent phosphoribosylglycinamide formyltransferase (388 aa).

Residues 20–21 (EL) and Glu80 contribute to the N(1)-(5-phospho-beta-D-ribosyl)glycinamide site. Residues Arg112, Lys153, 158–163 (SSGKGQ), 193–196 (EEFV), and Glu201 each bind ATP. An ATP-grasp domain is found at 117–306 (RLASEKLGLR…EFEIHVRSIL (190 aa)). Positions 265 and 277 each coordinate Mg(2+). Residues Asp284, Lys352, and 359 to 360 (RR) each bind N(1)-(5-phospho-beta-D-ribosyl)glycinamide.

It belongs to the PurK/PurT family. Homodimer.

The enzyme catalyses N(1)-(5-phospho-beta-D-ribosyl)glycinamide + formate + ATP = N(2)-formyl-N(1)-(5-phospho-beta-D-ribosyl)glycinamide + ADP + phosphate + H(+). Its pathway is purine metabolism; IMP biosynthesis via de novo pathway; N(2)-formyl-N(1)-(5-phospho-D-ribosyl)glycinamide from N(1)-(5-phospho-D-ribosyl)glycinamide (formate route): step 1/1. Involved in the de novo purine biosynthesis. Catalyzes the transfer of formate to 5-phospho-ribosyl-glycinamide (GAR), producing 5-phospho-ribosyl-N-formylglycinamide (FGAR). Formate is provided by PurU via hydrolysis of 10-formyl-tetrahydrofolate. This is Formate-dependent phosphoribosylglycinamide formyltransferase from Methanococcus vannielii (strain ATCC 35089 / DSM 1224 / JCM 13029 / OCM 148 / SB).